A 235-amino-acid polypeptide reads, in one-letter code: Large ribosomal subunit protein uL1 (235 aa).

This sequence belongs to the universal ribosomal protein uL1 family. In terms of assembly, part of the 50S ribosomal subunit.

Binds directly to 23S rRNA. The L1 stalk is quite mobile in the ribosome, and is involved in E site tRNA release. In terms of biological role, protein L1 is also a translational repressor protein, it controls the translation of the L11 operon by binding to its mRNA. This Desulfotalea psychrophila (strain LSv54 / DSM 12343) protein is Large ribosomal subunit protein uL1.